The primary structure comprises 236 residues: H2HPP isomerase (236 aa).

2 consecutive Cupin type-2 domains span residues 40–106 and 151–215; these read YVPP…AIDI and NIPG…SKSV. A divalent metal cation contacts are provided by H50, H52, Q56, H91, H162, H164, Q168, and H202. Position 223 (Y223) interacts with substrate.

In terms of assembly, monomer. It depends on Fe(2+) as a cofactor. Co(2+) is required as a cofactor.

The protein resides in the cytoplasm. It catalyses the reaction 3-[(4R)-4-hydroxycyclohexa-1,5-dien-1-yl]-2-oxopropanoate = 3-[(1E,4R)-4-hydroxycyclohex-2-en-1-ylidene]pyruvate. The protein operates within antibiotic biosynthesis; bacilysin biosynthesis. Functionally, part of the bacABCDEF operon responsible for the biosynthesis of the nonribosomally synthesized dipeptide antibiotic bacilysin, composed of L-alanine and L-anticapsin. Bacilysin is an irreversible inactivator of the glutaminase domain of glucosamine synthetase. BacB catalyzes the allylic isomerization of the endocyclic-delta(4),delta(8)-7R-dihydro-hydroxyphenylpyruvate (en-H2HPP) to generate a mixture of 3E,7R- and 3Z, 7R-olefins of the exocyclic-delta(3),delta(5)-dihydro-hydroxyphenylpyruvate (ex-H2HPP). The sequence is that of H2HPP isomerase from Bacillus amyloliquefaciens (Bacillus velezensis).